Here is a 120-residue protein sequence, read N- to C-terminus: Cytochrome b5 (120 aa).

A Cytochrome b5 heme-binding domain is found at 2–78 (PKVYSYQEVA…LKGLYIGDVD (77 aa)). 2 residues coordinate heme: H37 and H61. The chain crosses the membrane as a helical span at residues 98–118 (GSGTLVVILAILMLGVAYYLL).

This sequence belongs to the cytochrome b5 family.

The protein resides in the endoplasmic reticulum membrane. The protein localises to the microsome membrane. Functionally, membrane bound hemoprotein which function as an electron carrier for several membrane bound oxygenases. It plays a role in fatty-acid desaturation and is also involved in several steps of the sterol biosynthesis pathway, particularly in the 4-demethylation of the 4,4'-dimethyl zymosterol. The protein is Cytochrome b5 (CYB5) of Saccharomyces cerevisiae (strain ATCC 204508 / S288c) (Baker's yeast).